The following is a 268-amino-acid chain: Interleukin-1 alpha (268 aa).

The propeptide occupies 1–112; that stretch reads MAKVPDLFED…NTEEEIIKPR (112 aa). K82 is modified (N6-acetyllysine). Positions 82 to 86 are nuclear localization signal (NLS); sequence KKRRL. S87 bears the Phosphoserine mark. N-linked (GlcNAc...) asparagine glycosylation is found at N102 and N141.

This sequence belongs to the IL-1 family. In terms of assembly, monomer. Interacts with TMED10; the interaction mediates the translocation from the cytoplasm into the ERGIC (endoplasmic reticulum-Golgi intermediate compartment) and thereby secretion. Interacts with IL1R1. Interacts with S100A13; this interaction is the first step in the export of IL1A, followed by direct translocation of this complex across the plasma membrane. Acetylated within its nuclear localization sequence, which impacts subcellular localization. Post-translationally, proteolytic processed by CAPN1 in a calcium-dependent manner. Cleavage from 31 kDa precursor to 18 kDa biologically active molecules. In terms of processing, phosphorylated. Phosphorylation greatly enhances susceptibility to digestion and promotes the conversion of pre-IL1A alpha to the biologically active IL1A.

The protein localises to the nucleus. The protein resides in the cytoplasm. It is found in the secreted. Cytokine constitutively present intracellularly in nearly all resting non-hematopoietic cells that plays an important role in inflammation and bridges the innate and adaptive immune systems. After binding to its receptor IL1R1 together with its accessory protein IL1RAP, forms the high affinity interleukin-1 receptor complex. Signaling involves the recruitment of adapter molecules such as MYD88, IRAK1 or IRAK4. In turn, mediates the activation of NF-kappa-B and the three MAPK pathways p38, p42/p44 and JNK pathways. Within the cell, acts as an alarmin and cell death results in its liberation in the extracellular space after disruption of the cell membrane to induce inflammation and alert the host to injury or damage. In addition to its role as a danger signal, which occurs when the cytokine is passively released by cell necrosis, directly senses DNA damage and acts as signal for genotoxic stress without loss of cell integrity. The polypeptide is Interleukin-1 alpha (IL1A) (Bos taurus (Bovine)).